The chain runs to 142 residues: Large ribosomal subunit protein uL13 (142 aa).

The protein belongs to the universal ribosomal protein uL13 family. As to quaternary structure, part of the 50S ribosomal subunit.

In terms of biological role, this protein is one of the early assembly proteins of the 50S ribosomal subunit, although it is not seen to bind rRNA by itself. It is important during the early stages of 50S assembly. The polypeptide is Large ribosomal subunit protein uL13 (Pyrococcus furiosus (strain ATCC 43587 / DSM 3638 / JCM 8422 / Vc1)).